The primary structure comprises 824 residues: MGSSTGDLVTRIQSAHRFDHDALFRFAADNVSGFPTNPSQFKVSQFGHGQSNPTFLIEVGSGSSLKRYVLRKKPPGKLLQSAHAVDREFQVLRALGEHTQVPVPKVFCLCTDPAVIGTAFYIMEFMEGRIFIDPKLPNVAPERRNAIYRATAKALASLHSADVDAIGLEKYGRRGNYCKRQIDRWFKQYLASTSEGKPERNPKMFELVDWLRKNIPAEDSTGATSGLVHGDFRIDNLVFHPSEDRVIGIIDWELSTLGNQMCDVAYSCMHYIVNVQLDKEHVSEGFETTGLPEGMLSMPEFLLEYCSASGKPWPAANWKFYVAFSLFRAASIYTGVYSRWLMGNASAGERARNTGVQANELVESALGYIARENVLPEHPPSVQRDVSPSYESLVDGSGRFIPNRKVLELRQKLIKFMETHIYPMENEFSKLAQSDMRWTVHPQEEKLKEMAKREGLWNLFVPVDSAARARRELAATENKHNLSGKSFDQLFGEGLTNLEYGYLCEIMGRSVWAPQVFNCGAPDTGNMEVILRYGNKEQISEWLIPLLEGRIRSGFAMTEPQVASSDATNIECSIRRQGDSYVINGTKWWTSGAMDPRCRVLILMGKTDFNAPKHKQQSMILVDMRTPGISVKRPLTVFGFDDAPHGHAEISFENVVVPAKNILLGEGRGFEIAQGRLGPGRLHHCMRLIGAAERGMELMAQRALSRKTFGKFIAQHGSFVSDLAKLRVELEGTRLLVLEAADHLDKFGNKKARGILAMAKVAAPNMALKVLDTAIQVHGAAGVSSDTVLAHLWATARTLRIADGPDEVHLGTIGKLELQRASKL.

N-acetylglycine is present on Gly-2. FAD-binding positions include 555-565 (FAMTEPQVASS), 589-591 (WTS), Arg-706, Gln-776, and 776-780 (QVHGA). Residues 822–824 (SKL) carry the Microbody targeting signal motif.

It belongs to the acyl-CoA dehydrogenase family. Requires FAD as cofactor.

It is found in the peroxisome. It carries out the reaction a 2,3-saturated acyl-CoA + A = a 2,3-dehydroacyl-CoA + AH2. Involved with IBR1 and IBR10 in the peroxisomal beta-oxidation of indole-3-butyric acid (IBA) to form indole-3-acetic acid (IAA), a biologically active auxin. May be responsible for catalyzing the first step in IBA-CoA beta-oxidation. May play a role in defense response to pathogenic bacteria. This Arabidopsis thaliana (Mouse-ear cress) protein is Probable acyl-CoA dehydrogenase IBR3.